We begin with the raw amino-acid sequence, 203 residues long: Superoxide dismutase [Mn] (203 aa).

Histidine 27, histidine 81, aspartate 167, and histidine 171 together coordinate Mn(2+).

The protein belongs to the iron/manganese superoxide dismutase family. As to quaternary structure, homodimer. The cofactor is Mn(2+).

The catalysed reaction is 2 superoxide + 2 H(+) = H2O2 + O2. Its function is as follows. Destroys superoxide anion radicals which are normally produced within the cells and which are toxic to biological systems. In Buchnera aphidicola subsp. Acyrthosiphon pisum (strain APS) (Acyrthosiphon pisum symbiotic bacterium), this protein is Superoxide dismutase [Mn] (sodA).